Consider the following 461-residue polypeptide: tRNA modification GTPase MnmE (461 aa).

3 residues coordinate (6S)-5-formyl-5,6,7,8-tetrahydrofolate: R27, E89, and R128. The region spanning 224–382 is the TrmE-type G domain; that stretch reads GLKTAIVGRP…LEALIKKLFF (159 aa). N234 is a binding site for K(+). Residues 234-239, 253-259, and 278-281 each bind GTP; these read NVGKSS, TDVAGTT, and DTAG. S238 contacts Mg(2+). T253, V255, and T258 together coordinate K(+). A Mg(2+)-binding site is contributed by T259. A (6S)-5-formyl-5,6,7,8-tetrahydrofolate-binding site is contributed by K461.

The protein belongs to the TRAFAC class TrmE-Era-EngA-EngB-Septin-like GTPase superfamily. TrmE GTPase family. Homodimer. Heterotetramer of two MnmE and two MnmG subunits. It depends on K(+) as a cofactor.

Its subcellular location is the cytoplasm. Functionally, exhibits a very high intrinsic GTPase hydrolysis rate. Involved in the addition of a carboxymethylaminomethyl (cmnm) group at the wobble position (U34) of certain tRNAs, forming tRNA-cmnm(5)s(2)U34. In Lactobacillus delbrueckii subsp. bulgaricus (strain ATCC BAA-365 / Lb-18), this protein is tRNA modification GTPase MnmE.